The following is a 397-amino-acid chain: Probable protein phosphatase 2C 74 (397 aa).

The PPM-type phosphatase domain maps to 133-391 (GFWVASRRGL…DDVTVMVVDL (259 aa)). The Mn(2+) site is built by aspartate 170, glycine 171, aspartate 343, and aspartate 382.

It belongs to the PP2C family. Requires Mg(2+) as cofactor. Mn(2+) is required as a cofactor.

The catalysed reaction is O-phospho-L-seryl-[protein] + H2O = L-seryl-[protein] + phosphate. The enzyme catalyses O-phospho-L-threonyl-[protein] + H2O = L-threonyl-[protein] + phosphate. The polypeptide is Probable protein phosphatase 2C 74 (Oryza sativa subsp. japonica (Rice)).